The primary structure comprises 584 residues: MKFKSLITTTLALGVLASTGANFNNNEASAAAKPLDKSSSSLHHGYSKVHVPYAITVNGTSQNILSSLTFNKNQNISYKDLEDRVKSVLKSDRGISDIDLRLSKQAKYTVYFKNGTKKVIDLKAGIYTADLINTSEIKAININVDTKKQVEDKKKDKANYQVPYTITVNGTSQNILSNLTFNKNQNISYKDLEDKVKSVLESNRGITDVDLRLSKQAKYTVNFKNGTKKVIDLKSGIYTANLINSSDIKSININVDTKKHIENKAKRNYQVPYSINLNGTSTNILSNLSFSNKPWTNYKNLTSQIKSVLKHDRGISEQDLKYAKKAYYTVYFKNGGKRILQLNSKNYTANLVHAKDVKRIEITVKTGTKAKADRYVPYTIAVNGTSTPILSDLKFTGDPRVGYKDISKKVKSVLKHDRGIGERELKYAKKATYTVHFKNGTKKVININSNISQLNLLYVQDIKKIDIDVKTGTKAKADSYVPYTIAVNGTSTPILSKLKISNKQLISYKYLNDKVKSVLKSERGISDLDLKFAKQAKYTVYFKNGKKQVVNLKSDIFTPNLFSAKDIKKIDIDVKQYTKSKKNK.

An N-terminal signal peptide occupies residues 1–30 (MKFKSLITTTLALGVLASTGANFNNNEASA). MAP repeat units follow at residues 45–154 (GYSK…EDKK), 156–265 (DKAN…ENKA), 266–374 (KRNY…KADR), 375–474 (YVPY…TGTK), and 475–584 (AKAD…KKNK).

It is found in the cell membrane. In terms of biological role, binds various plasma and ECM-proteins. The protein is 65 kDa membrane protein of Staphylococcus aureus (strain Newman).